The chain runs to 389 residues: NADH-quinone oxidoreductase subunit D (389 aa).

Belongs to the complex I 49 kDa subunit family. As to quaternary structure, NDH-1 is composed of 14 different subunits. Subunits NuoB, C, D, E, F, and G constitute the peripheral sector of the complex.

The protein resides in the cell inner membrane. The catalysed reaction is a quinone + NADH + 5 H(+)(in) = a quinol + NAD(+) + 4 H(+)(out). NDH-1 shuttles electrons from NADH, via FMN and iron-sulfur (Fe-S) centers, to quinones in the respiratory chain. The immediate electron acceptor for the enzyme in this species is believed to be ubiquinone. Couples the redox reaction to proton translocation (for every two electrons transferred, four hydrogen ions are translocated across the cytoplasmic membrane), and thus conserves the redox energy in a proton gradient. The polypeptide is NADH-quinone oxidoreductase subunit D (Rickettsia prowazekii (strain Madrid E)).